Reading from the N-terminus, the 188-residue chain is Putative 3-methyladenine DNA glycosylase (188 aa).

This sequence belongs to the DNA glycosylase MPG family.

The protein is Putative 3-methyladenine DNA glycosylase of Ehrlichia ruminantium (Cowdria ruminantium).